The primary structure comprises 412 residues: Chorismate synthase (412 aa).

Positions 40 and 46 each coordinate NADP(+). FMN is bound by residues 134–136 (RAS), 255–256 (QA), glycine 299, 314–318 (KPIAT), and arginine 340.

The protein belongs to the chorismate synthase family. In terms of assembly, homotetramer. The cofactor is FMNH2.

It carries out the reaction 5-O-(1-carboxyvinyl)-3-phosphoshikimate = chorismate + phosphate. It functions in the pathway metabolic intermediate biosynthesis; chorismate biosynthesis; chorismate from D-erythrose 4-phosphate and phosphoenolpyruvate: step 7/7. Its function is as follows. Catalyzes the anti-1,4-elimination of the C-3 phosphate and the C-6 proR hydrogen from 5-enolpyruvylshikimate-3-phosphate (EPSP) to yield chorismate, which is the branch point compound that serves as the starting substrate for the three terminal pathways of aromatic amino acid biosynthesis. This reaction introduces a second double bond into the aromatic ring system. This chain is Chorismate synthase, found in Clavibacter michiganensis subsp. michiganensis (strain NCPPB 382).